The primary structure comprises 303 residues: Probable 5-dehydro-4-deoxyglucarate dehydratase (303 aa).

The protein belongs to the DapA family.

It carries out the reaction 5-dehydro-4-deoxy-D-glucarate + H(+) = 2,5-dioxopentanoate + CO2 + H2O. Its pathway is carbohydrate acid metabolism; D-glucarate degradation; 2,5-dioxopentanoate from D-glucarate: step 2/2. This is Probable 5-dehydro-4-deoxyglucarate dehydratase from Pseudomonas syringae pv. tomato (strain ATCC BAA-871 / DC3000).